The primary structure comprises 142 residues: uncharacterized protein (142 aa).

The signal sequence occupies residues 1-20 (MPSVNEFFIFFLIVWHTCEC). N80 carries N-linked (GlcNAc...) asparagine glycosylation.

This is an uncharacterized protein from Dictyostelium discoideum (Social amoeba).